A 418-amino-acid chain; its full sequence is Flavin-dependent L-tryptophan oxidase VioA (418 aa).

Gly-13 contacts Mg(2+). Ser-15 contacts FAD. Gly-16 is a Mg(2+) binding site. FAD contacts are provided by Asp-38, Arg-46, and Arg-64. Residues Arg-64 and His-163 each coordinate substrate. Position 208 (Leu-208) interacts with FAD. Ala-240 is a binding site for Mg(2+). Tyr-309 contacts substrate. Residue Met-398 participates in FAD binding.

Belongs to the flavin monoamine oxidase family. In terms of assembly, homodimer. FAD serves as cofactor. Requires Mg(2+) as cofactor.

It carries out the reaction L-tryptophan + O2 = 2-iminio-3-(indol-3-yl)propanoate + H2O2. The catalysed reaction is 7-chloro-L-tryptophan + O2 = 3-(7-chloroindol-3-yl)-2-iminopropanoate + H2O2. Its pathway is pigment biosynthesis; violacein biosynthesis. The enzyme generates the imine form of indole 3-pyruvate (IPA) from L-tryptophan (L-Trp), with concomitant two-electron reduction of O(2) to H(2)O(2). The polypeptide is Flavin-dependent L-tryptophan oxidase VioA (vioA) (Chromobacterium violaceum (strain ATCC 12472 / DSM 30191 / JCM 1249 / CCUG 213 / NBRC 12614 / NCIMB 9131 / NCTC 9757 / MK)).